Consider the following 114-residue polypeptide: Probable gas vesicle protein J2 (114 aa).

Residues 1 to 10 (MTDLDHRYPG) show a composition bias toward basic and acidic residues. Residues 1 to 21 (MTDLDHRYPGEETEPYGPPSG) form a disordered region.

This sequence belongs to the gas vesicle GvpA family. Interacts with GvpA.

The protein localises to the gas vesicle. A minor component of the gas vesicle, might be involved in nucleating gas vesicle formation. Gas vesicles (GV) are hollow, gas filled proteinaceous nanostructures. It is not clear what function GVs perform in soil bacteria. The sequence is that of Probable gas vesicle protein J2 from Streptomyces coelicolor (strain ATCC BAA-471 / A3(2) / M145).